A 491-amino-acid polypeptide reads, in one-letter code: Aspartyl/glutamyl-tRNA(Asn/Gln) amidotransferase subunit B (491 aa).

This sequence belongs to the GatB/GatE family. GatB subfamily. In terms of assembly, heterotrimer of A, B and C subunits.

The catalysed reaction is L-glutamyl-tRNA(Gln) + L-glutamine + ATP + H2O = L-glutaminyl-tRNA(Gln) + L-glutamate + ADP + phosphate + H(+). It catalyses the reaction L-aspartyl-tRNA(Asn) + L-glutamine + ATP + H2O = L-asparaginyl-tRNA(Asn) + L-glutamate + ADP + phosphate + 2 H(+). Functionally, allows the formation of correctly charged Asn-tRNA(Asn) or Gln-tRNA(Gln) through the transamidation of misacylated Asp-tRNA(Asn) or Glu-tRNA(Gln) in organisms which lack either or both of asparaginyl-tRNA or glutaminyl-tRNA synthetases. The reaction takes place in the presence of glutamine and ATP through an activated phospho-Asp-tRNA(Asn) or phospho-Glu-tRNA(Gln). This is Aspartyl/glutamyl-tRNA(Asn/Gln) amidotransferase subunit B from Trichormus variabilis (strain ATCC 29413 / PCC 7937) (Anabaena variabilis).